The following is a 927-amino-acid chain: DIS3-like exonuclease 2 (927 aa).

A compositionally biased stretch (basic residues) spans 1 to 12; sequence MDLKPNIRRKEK. Positions 1–168 are disordered; the sequence is MDLKPNIRRK…DTNNATEMVS (168 aa). A compositionally biased stretch (basic and acidic residues) spans 13-31; the sequence is RNLLKGEAALEKKGSIDRK. The span at 97 to 106 shows a compositional bias: basic residues; the sequence is VKPKAKKKNS. Positions 107–152 are enriched in basic and acidic residues; the sequence is KEKISKSSKQDEHKTDVHKESVSKLSKNLESRNNRDENSAKREKNN. Residues 153–168 show a composition bias toward polar residues; the sequence is SHQVEADTNNATEMVS. Residues Asp-453 and Asp-462 each coordinate Mg(2+).

Belongs to the RNR ribonuclease family. DIS3L2 subfamily. Requires Mg(2+) as cofactor. Mn(2+) serves as cofactor.

The protein localises to the cytoplasm. Its subcellular location is the P-body. In terms of biological role, 3'-5'-exoribonuclease that specifically recognizes RNAs polyuridylated at their 3' end and mediates their degradation. Component of an exosome-independent RNA degradation pathway that mediates degradation of cytoplasmic mRNAs that have been deadenylated and subsequently uridylated at their 3'. This chain is DIS3-like exonuclease 2 (dis32), found in Schizosaccharomyces pombe (strain 972 / ATCC 24843) (Fission yeast).